Reading from the N-terminus, the 129-residue chain is uncharacterized protein (129 aa).

The signal sequence occupies residues 1–20; that stretch reads MIYPLFRICILGAFLLGSYA.

This is an uncharacterized protein from Saccharomyces cerevisiae (strain ATCC 204508 / S288c) (Baker's yeast).